A 123-amino-acid polypeptide reads, in one-letter code: Large ribosomal subunit protein uL24 (123 aa).

The interval 100–123 is disordered; sequence RRPDGSTYKAERSVRISRKTGKEI.

It belongs to the universal ribosomal protein uL24 family. As to quaternary structure, part of the 50S ribosomal subunit.

Its function is as follows. One of two assembly initiator proteins, it binds directly to the 5'-end of the 23S rRNA, where it nucleates assembly of the 50S subunit. One of the proteins that surrounds the polypeptide exit tunnel on the outside of the subunit. The polypeptide is Large ribosomal subunit protein uL24 (Nocardioides sp. (strain ATCC BAA-499 / JS614)).